Consider the following 525-residue polypeptide: Lymphocyte activation gene 3 protein (525 aa).

An N-terminal signal peptide occupies residues 1-22 (MWEAQFLGLLFLQPLWVAPVKP). The Extracellular portion of the chain corresponds to 23–450 (LQPGAEVPVV…APGALPAGHL (428 aa)). Positions 37 to 167 (GAPAQLPCSP…LSCRLRLRLG (131 aa)) constitute an Ig-like V-type domain. An interaction with FGL1 region spans residues 37-252 (GAPAQLPCSP…LTYRDGFNVS (216 aa)). Cys44 and Cys160 are disulfide-bonded. The interval 62 to 97 (TWQHQPDSGPPAAAPGHPLAPGPHPAAPSSWGPRPR) is disordered. A compositionally biased stretch (pro residues) spans 69-87 (SGPPAAAPGHPLAPGPHPA). Residues 168–252 (QASMTASPPG…LTYRDGFNVS (85 aa)) enclose the Ig-like C2-type 1 domain. An N-linked (GlcNAc...) asparagine glycan is attached at Asn188. Cys189 and Cys241 are oxidised to a cystine. 2 N-linked (GlcNAc...) asparagine glycosylation sites follow: Asn250 and Asn256. 2 consecutive Ig-like C2-type domains span residues 265–343 (PTPL…QQLN) and 348–419 (LAII…QGER). A disulfide bond links Cys282 and Cys333. Asn343 carries N-linked (GlcNAc...) asparagine glycosylation. Cysteines 369 and 412 form a disulfide. The tract at residues 429 to 450 (ELSSPGAQRSGRAPGALPAGHL) is connecting peptide. The helical transmembrane segment at 451 to 471 (LLFLILGVLSLLLLVTGAFGF) threads the bilayer. The Cytoplasmic portion of the chain corresponds to 472 to 525 (HLWRRQWRPRRFSALEQGIHPPQAQSKIEELEQEPEPEPEPEPEPEPEPEPEQL). The interval 487 to 525 (EQGIHPPQAQSKIEELEQEPEPEPEPEPEPEPEPEPEQL) is disordered. The KIEELE motif signature appears at 498 to 503 (KIEELE). The segment at 501–524 (ELEQEPEPEPEPEPEPEPEPEPEQ) is 12 X 2 AA tandem repeats of E-X. Residues 502–525 (LEQEPEPEPEPEPEPEPEPEPEQL) are compositionally biased toward acidic residues.

The protein belongs to the LAG3 family. Interacts with MHC class II (MHC-II); selectively recognizes stable complexes of peptide and MHC-II. Interacts with FGL1 (via the Fibrinogen C-terminal domain). In terms of processing, proteolytically cleaved by ADAM10 and ADAM17 within the connecting peptide region, leading to release of Secreted lymphocyte activation gene 3 protein (sLAG-3). ADAM10 mediates constitutive cleavage, but cleavage increases following T-cell activation, whereas shedding by ADAM17 is induced by TCR signaling in a PRKCQ-dependent manner. Primarily expressed in activated T-cells and a subset of natural killer (NK) cells.

Its subcellular location is the cell membrane. The protein localises to the secreted. In terms of biological role, lymphocyte activation gene 3 protein: Inhibitory receptor on antigen activated T-cells. Delivers inhibitory signals upon binding to ligands, such as FGL1. FGL1 constitutes a major ligand of LAG3 and is responsible for LAG3 T-cell inhibitory function. Following TCR engagement, LAG3 associates with CD3-TCR in the immunological synapse and directly inhibits T-cell activation. May inhibit antigen-specific T-cell activation in synergy with PDCD1/PD-1, possibly by acting as a coreceptor for PDCD1/PD-1. Negatively regulates the proliferation, activation, effector function and homeostasis of both CD8(+) and CD4(+) T-cells. Also mediates immune tolerance: constitutively expressed on a subset of regulatory T-cells (Tregs) and contributes to their suppressive function. Also acts as a negative regulator of plasmacytoid dendritic cell (pDCs) activation. Binds MHC class II (MHC-II); the precise role of MHC-II-binding is however unclear. Functionally, may function as a ligand for MHC class II (MHC-II) on antigen-presenting cells (APC), promoting APC activation/maturation and driving Th1 immune response. This is Lymphocyte activation gene 3 protein from Homo sapiens (Human).